A 189-amino-acid polypeptide reads, in one-letter code: UPF0301 protein Plut_0637 (189 aa).

The protein belongs to the UPF0301 (AlgH) family.

The polypeptide is UPF0301 protein Plut_0637 (Chlorobium luteolum (strain DSM 273 / BCRC 81028 / 2530) (Pelodictyon luteolum)).